A 424-amino-acid chain; its full sequence is Serpin-Z2A (424 aa).

Residues 370-394 (GTEAAASTACTIRLLSMSYPEDFVA) are RCL.

The protein belongs to the serpin family.

In terms of biological role, probable serine protease inhibitor. The polypeptide is Serpin-Z2A (Oryza sativa subsp. japonica (Rice)).